A 413-amino-acid chain; its full sequence is Glucose-1-phosphate adenylyltransferase (413 aa).

Residues Tyr-102, Gly-167, 182 to 183 (EK), and Ser-200 contribute to the alpha-D-glucose 1-phosphate site.

Belongs to the bacterial/plant glucose-1-phosphate adenylyltransferase family. As to quaternary structure, homotetramer.

The enzyme catalyses alpha-D-glucose 1-phosphate + ATP + H(+) = ADP-alpha-D-glucose + diphosphate. It participates in glycan biosynthesis; glycogen biosynthesis. Functionally, involved in the biosynthesis of ADP-glucose, a building block required for the elongation reactions to produce glycogen. Catalyzes the reaction between ATP and alpha-D-glucose 1-phosphate (G1P) to produce pyrophosphate and ADP-Glc. In Deinococcus deserti (strain DSM 17065 / CIP 109153 / LMG 22923 / VCD115), this protein is Glucose-1-phosphate adenylyltransferase.